The following is a 348-amino-acid chain: 4-hydroxy-2-oxovalerate aldolase (348 aa).

Positions 9-261 constitute a Pyruvate carboxyltransferase domain; the sequence is ITVHDMTLRD…RTGVDVWKIQ (253 aa). 17-18 contacts substrate; that stretch reads RD. Mn(2+) is bound at residue D18. Residue H21 is the Proton acceptor of the active site. Positions 171 and 200 each coordinate substrate. The Mn(2+) site is built by H200 and H202. Y291 serves as a coordination point for substrate.

This sequence belongs to the 4-hydroxy-2-oxovalerate aldolase family.

It carries out the reaction (S)-4-hydroxy-2-oxopentanoate = acetaldehyde + pyruvate. This chain is 4-hydroxy-2-oxovalerate aldolase, found in Ralstonia pickettii (strain 12J).